Here is a 253-residue protein sequence, read N- to C-terminus: 5'-nucleotidase SurE (253 aa).

A divalent metal cation contacts are provided by Asp-8, Asp-9, Ser-39, and Asn-92.

Belongs to the SurE nucleotidase family. The cofactor is a divalent metal cation.

It is found in the cytoplasm. The enzyme catalyses a ribonucleoside 5'-phosphate + H2O = a ribonucleoside + phosphate. Nucleotidase that shows phosphatase activity on nucleoside 5'-monophosphates. The protein is 5'-nucleotidase SurE of Burkholderia pseudomallei (strain 1710b).